Here is a 443-residue protein sequence, read N- to C-terminus: Cyclin-A2-1 (443 aa).

Residues 1–10 (MHRASSKHTN) show a composition bias toward basic residues. Positions 1–61 (MHRASSKHTN…KRVARPSNKR (61 aa)) are disordered. Residues 11–25 (AKKEAISTSKIRDNN) show a composition bias toward basic and acidic residues.

Belongs to the cyclin family. Cyclin AB subfamily. As to expression, expressed in tissues with active cell division: apical root and shoot meristems, lateral root and leaf primordia, floral meristems and developing pollen.

In terms of biological role, may negatively regulate endocycles and act as a regulator of ploidy levels in endoreduplication. In Arabidopsis thaliana (Mouse-ear cress), this protein is Cyclin-A2-1 (CYCA2-1).